Here is a 230-residue protein sequence, read N- to C-terminus: Androgen-dependent TFPI-regulating protein (230 aa).

Topologically, residues 1 to 7 (MTKTTTC) are cytoplasmic. A helical transmembrane segment spans residues 8–28 (VYHFLVLNWYIFLNYHIPQIG). The Extracellular segment spans residues 29–45 (RNEEKLREFHDGGRSKY). Residues 46–66 (LTLLNLLLQAIFFGVACLDDV) traverse the membrane as a helical segment. Over 67–85 (LKRVIGRKDIKFVTSFRDL) the chain is Cytoplasmic. Residues 86 to 106 (LFTTMAFPISTFVFLVFWTLF) traverse the membrane as a helical segment. Residues 107–120 (HYDRSLVYPKGLDD) lie on the Extracellular side of the membrane. The helical transmembrane segment at 121–141 (FFPAWVNHAMHTSIFPFSLFE) threads the bilayer. The Cytoplasmic portion of the chain corresponds to 142-154 (TILRPHNYPSKKL). A helical transmembrane segment spans residues 155–175 (GLTLLGAFNFAYIIRILWRYV). Residues 176–190 (QTGNWVYPVFDSLSP) lie on the Extracellular side of the membrane. The helical transmembrane segment at 191–211 (LGIIIFFSAAYILVAGIYLFG) threads the bilayer. The Cytoplasmic segment spans residues 212–230 (EKINHWKWGAIAKPQMKKN).

This sequence belongs to the AIG1 family.

The protein localises to the cell membrane. It carries out the reaction 9-hexadecanoyloxy-octadecanoate + H2O = 9-hydroxy-octadecanoate + hexadecanoate + H(+). It catalyses the reaction 12-hexadecanoyloxy-octadecanoate + H2O = 12-hydroxyoctadecanoate + hexadecanoate + H(+). The enzyme catalyses 9-(9Z-hexadecenoyloxy)-octadecanoate + H2O = (9Z)-hexadecenoate + 9-hydroxy-octadecanoate + H(+). The catalysed reaction is 12-(9Z-hexadecenoyloxy)-octadecanoate + H2O = 12-hydroxyoctadecanoate + (9Z)-hexadecenoate + H(+). It carries out the reaction 13-(9Z-hexadecenoyloxy)-octadecanoate + H2O = 13-hydroxy-octadecanoate + (9Z)-hexadecenoate + H(+). It catalyses the reaction 9-octadecanoyloxy-octadecanoate + H2O = 9-hydroxy-octadecanoate + octadecanoate + H(+). The enzyme catalyses 12-octadecanoyloxy-octadecanoate + H2O = 12-hydroxyoctadecanoate + octadecanoate + H(+). The catalysed reaction is 13-octadecanoyloxy-octadecanoate + H2O = 13-hydroxy-octadecanoate + octadecanoate + H(+). It carries out the reaction 9-(9Z-octadecenoyloxy)-octadecanoate + H2O = 9-hydroxy-octadecanoate + (9Z)-octadecenoate + H(+). It catalyses the reaction 12-(9Z-octadecenoyloxy)-octadecanoate + H2O = 12-hydroxyoctadecanoate + (9Z)-octadecenoate + H(+). The enzyme catalyses 13-(9Z-octadecenoyloxy)-octadecanoate + H2O = 13-hydroxy-octadecanoate + (9Z)-octadecenoate + H(+). The catalysed reaction is 5-(9Z-octadecenoyloxy)-octadecanoate + H2O = 5-hydroxy-octadecanoate + (9Z)-octadecenoate + H(+). Its function is as follows. Hydrolyzes bioactive fatty-acid esters of hydroxy-fatty acids (FAHFAs), but not other major classes of lipids. Shows a preference for FAHFAs with branching distal from the carboxylate head group of the lipids. Regulates the expression and the cell-associated anticoagulant activity of the inhibitor TFPI in endothelial cells (in vitro). This is Androgen-dependent TFPI-regulating protein (Adtrp) from Mus musculus (Mouse).